A 619-amino-acid chain; its full sequence is Chaperone protein HscA homolog (619 aa).

The protein belongs to the heat shock protein 70 family.

Functionally, chaperone involved in the maturation of iron-sulfur cluster-containing proteins. Has a low intrinsic ATPase activity which is markedly stimulated by HscB. The polypeptide is Chaperone protein HscA homolog (Azotobacter vinelandii).